Here is a 567-residue protein sequence, read N- to C-terminus: ERO1-like protein 2 (567 aa).

Residues 1–22 form the signal peptide; sequence MKIAKGLVGLLILYKNVCQVLC. A glycan (N-linked (GlcNAc...) asparagine) is linked at Asn-49. 4 disulfides stabilise this stretch: Cys-88-Cys-386, Cys-98-Cys-103, Cys-154-Cys-325, and Cys-389-Cys-392. FAD contacts are provided by Arg-188, Thr-190, Trp-201, Ser-258, His-261, and Lys-290. The active-site Nucleophile is Cys-389. Residue Cys-392 is part of the active site. Asn-546 is a glycosylation site (N-linked (GlcNAc...) asparagine).

It belongs to the EROs family. May function both as a monomer and a homodimer. It depends on FAD as a cofactor. N-glycosylated.

The protein localises to the endoplasmic reticulum membrane. Essential oxidoreductase that oxidizes proteins in the endoplasmic reticulum to produce disulfide bonds. Acts by oxidizing directly pdi1 isomerase through a direct disulfide exchange. Does not act as a direct oxidant of folding substrate, but relies on pdi1 to transfer oxidizing equivalent. Does not oxidize all pdi related proteins, suggesting that it can discriminate between pdi1 and related proteins. Its reoxidation probably involves electron transfer to molecular oxygen via FAD. Acts independently of glutathione. May be responsible for a significant proportion of reactive oxygen species (ROS) in the cell, thereby being a source of oxidative stress. The protein is ERO1-like protein 2 (ero12) of Schizosaccharomyces pombe (strain 972 / ATCC 24843) (Fission yeast).